An 837-amino-acid chain; its full sequence is Semaphorin-4G (837 aa).

A signal peptide spans 1–17; sequence MWGRLWPLLFSFLTVTA. The Extracellular segment spans residues 18–673; the sequence is VPGPSLRRPS…GAQLAHDMRM (656 aa). In terms of domain architecture, Sema spans 35–503; the sequence is RLTISYEELS…AASGVLQFPL (469 aa). N-linked (GlcNAc...) asparagine glycosylation is found at Asn-55, Asn-111, and Asn-126. A disulfide bond links Cys-104 and Cys-115. Intrachain disulfides connect Cys-133-Cys-142, Cys-268-Cys-375, and Cys-292-Cys-335. The N-linked (GlcNAc...) asparagine glycan is linked to Asn-386. In terms of domain architecture, PSI spans 505–556; the sequence is SCSRYQSCYDCILARDPYCGWDSSIHACMVATTVANRTELIQDIERGNRGCE. Intrachain disulfides connect Cys-506–Cys-523 and Cys-515–Cys-532. 2 N-linked (GlcNAc...) asparagine glycosylation sites follow: Asn-540 and Asn-596. The Ig-like C2-type domain occupies 565 to 647; that stretch reads PPLKTRSVLR…RMLLASYSLT (83 aa). Cys-582 and Cys-630 form a disulfide bridge. The helical transmembrane segment at 674–694 threads the bilayer; it reads FYVVAIAILGGLCLILASSLL. The Cytoplasmic portion of the chain corresponds to 695–837; it reads YVACLKGGRR…LVEQLDESSV (143 aa). A disordered region spans residues 721 to 776; that stretch reads SAVQLQTVSGQCPGEEDEGDDGEGTGGLESGCLQIIPGEGAPAPPPPPPPPPPAEL. The segment covering 734–743 has biased composition (acidic residues); the sequence is GEEDEGDDGE. Over residues 762-774 the composition is skewed to pro residues; that stretch reads PAPPPPPPPPPPA. A phosphoserine mark is found at Ser-794 and Ser-836.

Belongs to the semaphorin family. Interacts with PLXNB2. Brain, spinal cord, and several sensory organs as well as specific populations of projection neurons.

It is found in the cell membrane. Cell surface receptor for PLXNB2. May play a role in axon guidance. This is Semaphorin-4G (Sema4g) from Mus musculus (Mouse).